We begin with the raw amino-acid sequence, 137 residues long: Small ribosomal subunit protein uS12 (137 aa).

A disordered region spans residues 1-57; it reads MPTINQLVRKPRKSKTKQSDSPVLNRGFNSKKKQFTNLNSPQKRGVCTRVGTMTPRK. The residue at position 102 (aspartate 102) is a 3-methylthioaspartic acid. The segment at 118–137 is disordered; the sequence is SGVDGRRQGRSLYGTKKPKN.

It belongs to the universal ribosomal protein uS12 family. Part of the 30S ribosomal subunit. Contacts proteins S8 and S17. May interact with IF1 in the 30S initiation complex.

Functionally, with S4 and S5 plays an important role in translational accuracy. In terms of biological role, interacts with and stabilizes bases of the 16S rRNA that are involved in tRNA selection in the A site and with the mRNA backbone. Located at the interface of the 30S and 50S subunits, it traverses the body of the 30S subunit contacting proteins on the other side and probably holding the rRNA structure together. The combined cluster of proteins S8, S12 and S17 appears to hold together the shoulder and platform of the 30S subunit. In Staphylococcus epidermidis (strain ATCC 12228 / FDA PCI 1200), this protein is Small ribosomal subunit protein uS12.